The primary structure comprises 347 residues: Phosphate acyltransferase (347 aa).

The protein belongs to the PlsX family. Homodimer. Probably interacts with PlsY.

The protein localises to the cytoplasm. It carries out the reaction a fatty acyl-[ACP] + phosphate = an acyl phosphate + holo-[ACP]. The protein operates within lipid metabolism; phospholipid metabolism. Its function is as follows. Catalyzes the reversible formation of acyl-phosphate (acyl-PO(4)) from acyl-[acyl-carrier-protein] (acyl-ACP). This enzyme utilizes acyl-ACP as fatty acyl donor, but not acyl-CoA. The polypeptide is Phosphate acyltransferase (Sinorhizobium medicae (strain WSM419) (Ensifer medicae)).